We begin with the raw amino-acid sequence, 168 residues long: Protein-export protein SecB (168 aa).

It belongs to the SecB family. In terms of assembly, homotetramer, a dimer of dimers. One homotetramer interacts with 1 SecA dimer.

Its subcellular location is the cytoplasm. Its function is as follows. One of the proteins required for the normal export of preproteins out of the cell cytoplasm. It is a molecular chaperone that binds to a subset of precursor proteins, maintaining them in a translocation-competent state. It also specifically binds to its receptor SecA. The sequence is that of Protein-export protein SecB from Haemophilus influenzae (strain PittGG).